We begin with the raw amino-acid sequence, 810 residues long: Zinc finger CCCH domain-containing protein 11A (810 aa).

3 C3H1-type zinc fingers span residues 2-29 (PNQGEDCYFFFYSTCTKGDSCPFRHCEA), 31-57 (IGNETVCTLWQEGRCFRQVCRFRHMEI), and 60-86 (KRSEIPCYWENQPTGCQKLNCAFHHNR). Serine 108 is subject to Phosphoserine. Glycyl lysine isopeptide (Lys-Gly) (interchain with G-Cter in SUMO2) cross-links involve residues lysine 114 and lysine 124. A Phosphoserine modification is found at serine 132. 4 disordered regions span residues 139 to 194 (MKVE…GLRV), 223 to 258 (KKMKEKSKKQGEGSSGVSSLLLHPEPVPGPEKENVR), 285 to 351 (GKRK…DKVN), and 367 to 432 (ERAS…TTCI). Lysine 140 is covalently cross-linked (Glycyl lysine isopeptide (Lys-Gly) (interchain with G-Cter in SUMO2)). A phosphoserine mark is found at serine 149 and serine 171. Acidic residues predominate over residues 160 to 175 (ADDDEDDDDQFSEEGD). Serine 290 carries the phosphoserine modification. 2 stretches are compositionally biased toward basic and acidic residues: residues 309–322 (KKVEAPETNIDKTP) and 367–390 (ERASQKRGELQTKLKTEGPSKTDD). Threonine 321 carries the post-translational modification Phosphothreonine. Residues 362–423 (EEILLERASQ…KHRQQEAERQ (62 aa)) adopt a coiled-coil conformation. Residue serine 370 is modified to Phosphoserine. Positions 391–402 (STSGARSSSTIR) are enriched in polar residues. Over residues 417–432 (QQEAERQKSKKDTTCI) the composition is skewed to basic and acidic residues. Residue lysine 478 forms a Glycyl lysine isopeptide (Lys-Gly) (interchain with G-Cter in SUMO2) linkage. A disordered region spans residues 482-549 (ALRVQQSSES…KEASGETTGV (68 aa)). Residues 486–498 (QQSSESSTSSPSQ) show a composition bias toward low complexity. Lysine 619 participates in a covalent cross-link: Glycyl lysine isopeptide (Lys-Gly) (interchain with G-Cter in SUMO2). The tract at residues 715–768 (TVPEAENPRDSLVLPPTQSSSDSSPPEVSGPSSSQMSMKTRRLSSASTGKPPLS) is disordered. Over residues 729–748 (PPTQSSSDSSPPEVSGPSSS) the composition is skewed to low complexity. Polar residues predominate over residues 749–762 (QMSMKTRRLSSAST).

In terms of assembly, interacts with TREX complex components THOC2, DDX39 and POLDIP3; the interactions are ATP-dependent. Interacts with PABPN1; this interaction retains ZC3H11A in nuclear speckles. Interacts with KPNA3.

It localises to the nucleus. Its subcellular location is the nucleus speckle. Functionally, through its association with TREX complex components, may participate in the export and post-transcriptional coordination of selected mRNA transcripts, including those required to maintain the metabolic processes in embryonic cells. Binds RNA. (Microbial infection) Plays a role in efficient growth of several nuclear-replicating viruses such as HIV-1, influenza virus or herpes simplex virus 1/HHV-1. Required for efficient viral mRNA export. May be required for proper polyadenylation of adenovirus type 5/HAdV-5 capsid mRNA. The polypeptide is Zinc finger CCCH domain-containing protein 11A (ZC3H11A) (Homo sapiens (Human)).